Consider the following 244-residue polypeptide: Ribonuclease P protein component 3 (244 aa).

It belongs to the eukaryotic/archaeal RNase P protein component 3 family. Consists of a catalytic RNA component and at least 4-5 protein subunits.

Its subcellular location is the cytoplasm. It catalyses the reaction Endonucleolytic cleavage of RNA, removing 5'-extranucleotides from tRNA precursor.. In terms of biological role, part of ribonuclease P, a protein complex that generates mature tRNA molecules by cleaving their 5'-ends. In Methanopyrus kandleri (strain AV19 / DSM 6324 / JCM 9639 / NBRC 100938), this protein is Ribonuclease P protein component 3.